The chain runs to 75 residues: Small ribosomal subunit protein eS28 (75 aa).

The protein belongs to the eukaryotic ribosomal protein eS28 family.

This chain is Small ribosomal subunit protein eS28, found in Methanococcus aeolicus (strain ATCC BAA-1280 / DSM 17508 / OCM 812 / Nankai-3).